We begin with the raw amino-acid sequence, 1369 residues long: DNA-directed RNA polymerase subunit beta' (1369 aa).

The disordered stretch occupies residues 1–43; the sequence is MTSSSPKTRKSSTKSKAKRGSKSKKAAEIKAVQRLSKTPPPFR. Positions 7 to 24 are enriched in basic residues; it reads KTRKSSTKSKAKRGSKSK. The Zn(2+) site is built by C253, C320, C327, and C330. The tract at residues 1294 to 1369 is disordered; that stretch reads TVDMPSSPVA…LQEEGLLSDE (76 aa). Acidic residues predominate over residues 1342–1351; the sequence is DDELSAEDQM. Over residues 1357–1369 the composition is skewed to low complexity; sequence LEGLQEEGLLSDE.

It belongs to the RNA polymerase beta' chain family. RpoC2 subfamily. In cyanobacteria the RNAP catalytic core is composed of 2 alpha, 1 beta, 1 beta', 1 gamma and 1 omega subunit. When a sigma factor is associated with the core the holoenzyme is formed, which can initiate transcription. Zn(2+) is required as a cofactor.

The enzyme catalyses RNA(n) + a ribonucleoside 5'-triphosphate = RNA(n+1) + diphosphate. Functionally, DNA-dependent RNA polymerase catalyzes the transcription of DNA into RNA using the four ribonucleoside triphosphates as substrates. In Prochlorococcus marinus (strain NATL1A), this protein is DNA-directed RNA polymerase subunit beta'.